The chain runs to 308 residues: HPr kinase/phosphorylase (308 aa).

Active-site residues include histidine 138 and lysine 159. 153–160 provides a ligand contact to ATP; it reads GESGLGKS. Serine 160 serves as a coordination point for Mg(2+). Residue aspartate 177 is the Proton acceptor; for phosphorylation activity. Proton donor; for dephosphorylation activity of the active site. The segment at 201–210 is important for the catalytic mechanism of both phosphorylation and dephosphorylation; sequence LEVRGLGLLD. Position 202 (glutamate 202) interacts with Mg(2+). Residue arginine 243 is part of the active site. The interval 264-269 is important for the catalytic mechanism of dephosphorylation; it reads QVAAGR.

The protein belongs to the HPrK/P family. Homohexamer. Mg(2+) serves as cofactor.

The catalysed reaction is [HPr protein]-L-serine + ATP = [HPr protein]-O-phospho-L-serine + ADP + H(+). It catalyses the reaction [HPr protein]-O-phospho-L-serine + phosphate + H(+) = [HPr protein]-L-serine + diphosphate. Catalyzes the ATP- as well as the pyrophosphate-dependent phosphorylation of a specific serine residue in HPr, a phosphocarrier protein of the phosphoenolpyruvate-dependent sugar phosphotransferase system (PTS). HprK/P also catalyzes the pyrophosphate-producing, inorganic phosphate-dependent dephosphorylation (phosphorolysis) of seryl-phosphorylated HPr (P-Ser-HPr). This is HPr kinase/phosphorylase from Bordetella bronchiseptica (strain ATCC BAA-588 / NCTC 13252 / RB50) (Alcaligenes bronchisepticus).